The chain runs to 313 residues: Pyrimidine-specific ribonucleoside hydrolase RihB (313 aa).

Aspartate 11 serves as the catalytic Proton acceptor. Residues aspartate 11, aspartate 16, and valine 124 each contribute to the Ca(2+) site. Substrate is bound by residues glutamine 227 and histidine 239. Residue aspartate 240 coordinates Ca(2+).

It belongs to the IUNH family. RihB subfamily. In terms of assembly, homotetramer. Requires Ca(2+) as cofactor.

It carries out the reaction a pyrimidine ribonucleoside + H2O = a pyrimidine nucleobase + D-ribose. Hydrolyzes cytidine or uridine to ribose and cytosine or uracil, respectively. Has a clear preference for cytidine over uridine. Strictly specific for ribonucleosides. The polypeptide is Pyrimidine-specific ribonucleoside hydrolase RihB (Escherichia coli O9:H4 (strain HS)).